The chain runs to 274 residues: Large ribosomal subunit protein uL2cz/uL2cy (274 aa).

The segment at 225 to 274 is disordered; sequence PVDHPHGGGEGRAPIGRKKPVTPWGYPALGRRTRKRKKYSETLILRRRSK.

Belongs to the universal ribosomal protein uL2 family. Part of the 50S ribosomal subunit.

The protein resides in the plastid. The protein localises to the chloroplast. The chain is Large ribosomal subunit protein uL2cz/uL2cy (rpl2-A) from Crucihimalaya wallichii (Rock-cress).